Consider the following 247-residue polypeptide: Large ribosomal subunit protein uL24m (247 aa).

The KOW domain maps to 84-117; sequence FFRGDRIEVLVGKDKGKQGIVTQVIPERNWVIVE.

It belongs to the universal ribosomal protein uL24 family. Component of the mitochondrial ribosome large subunit (39S) which comprises a 16S rRNA and about 50 distinct proteins.

The protein localises to the mitochondrion. In Drosophila pseudoobscura pseudoobscura (Fruit fly), this protein is Large ribosomal subunit protein uL24m (mRpL24).